A 297-amino-acid chain; its full sequence is Lipoyl synthase (297 aa).

[4Fe-4S] cluster contacts are provided by cysteine 34, cysteine 39, cysteine 45, cysteine 60, cysteine 64, cysteine 67, and serine 273. Residues 46–262 enclose the Radical SAM core domain; the sequence is WNKRHATVMI…KYVAYSKGFL (217 aa).

It belongs to the radical SAM superfamily. Lipoyl synthase family. It depends on [4Fe-4S] cluster as a cofactor.

It is found in the cytoplasm. The enzyme catalyses [[Fe-S] cluster scaffold protein carrying a second [4Fe-4S](2+) cluster] + N(6)-octanoyl-L-lysyl-[protein] + 2 oxidized [2Fe-2S]-[ferredoxin] + 2 S-adenosyl-L-methionine + 4 H(+) = [[Fe-S] cluster scaffold protein] + N(6)-[(R)-dihydrolipoyl]-L-lysyl-[protein] + 4 Fe(3+) + 2 hydrogen sulfide + 2 5'-deoxyadenosine + 2 L-methionine + 2 reduced [2Fe-2S]-[ferredoxin]. It functions in the pathway protein modification; protein lipoylation via endogenous pathway; protein N(6)-(lipoyl)lysine from octanoyl-[acyl-carrier-protein]: step 2/2. Its function is as follows. Catalyzes the radical-mediated insertion of two sulfur atoms into the C-6 and C-8 positions of the octanoyl moiety bound to the lipoyl domains of lipoate-dependent enzymes, thereby converting the octanoylated domains into lipoylated derivatives. This Ehrlichia chaffeensis (strain ATCC CRL-10679 / Arkansas) protein is Lipoyl synthase.